Consider the following 419-residue polypeptide: Elongation factor Tu, chloroplastic (419 aa).

One can recognise a tr-type G domain in the interval 10 to 214 (KPHVNIGTIG…KVDEYIPTPD (205 aa)). The segment at 19 to 26 (GHVDHGKT) is G1. 19 to 26 (GHVDHGKT) is a GTP binding site. Mg(2+) is bound at residue Thr26. The tract at residues 60 to 64 (GITIN) is G2. The segment at 81–84 (DCPG) is G3. Residues 81-85 (DCPGH) and 136-139 (NKED) contribute to the GTP site. Positions 136–139 (NKED) are G4. The tract at residues 174 to 176 (SAL) is G5.

The protein belongs to the TRAFAC class translation factor GTPase superfamily. Classic translation factor GTPase family. EF-Tu/EF-1A subfamily.

Its subcellular location is the plastid. The protein resides in the chloroplast. It carries out the reaction GTP + H2O = GDP + phosphate + H(+). Functionally, GTP hydrolase that promotes the GTP-dependent binding of aminoacyl-tRNA to the A-site of ribosomes during protein biosynthesis. The protein is Elongation factor Tu, chloroplastic (tufA) of Tetradesmus obliquus (Green alga).